A 347-amino-acid polypeptide reads, in one-letter code: Phosphoribosylformylglycinamidine cyclo-ligase (347 aa).

This sequence belongs to the AIR synthase family.

It localises to the cytoplasm. It catalyses the reaction 2-formamido-N(1)-(5-O-phospho-beta-D-ribosyl)acetamidine + ATP = 5-amino-1-(5-phospho-beta-D-ribosyl)imidazole + ADP + phosphate + H(+). The protein operates within purine metabolism; IMP biosynthesis via de novo pathway; 5-amino-1-(5-phospho-D-ribosyl)imidazole from N(2)-formyl-N(1)-(5-phospho-D-ribosyl)glycinamide: step 2/2. This Yersinia enterocolitica serotype O:8 / biotype 1B (strain NCTC 13174 / 8081) protein is Phosphoribosylformylglycinamidine cyclo-ligase.